Here is a 368-residue protein sequence, read N- to C-terminus: 3-isopropylmalate dehydrogenase (368 aa).

80-93 (GPKWDNLEFSKKPE) serves as a coordination point for NAD(+). Positions 100, 110, 138, and 229 each coordinate substrate. Positions 229, 253, and 257 each coordinate Mg(2+). 292–304 (GSAPDIAGKEIAN) contacts NAD(+).

Belongs to the isocitrate and isopropylmalate dehydrogenases family. LeuB type 1 subfamily. In terms of assembly, homodimer. Mg(2+) is required as a cofactor. It depends on Mn(2+) as a cofactor.

It is found in the cytoplasm. It catalyses the reaction (2R,3S)-3-isopropylmalate + NAD(+) = 4-methyl-2-oxopentanoate + CO2 + NADH. It functions in the pathway amino-acid biosynthesis; L-leucine biosynthesis; L-leucine from 3-methyl-2-oxobutanoate: step 3/4. Its function is as follows. Catalyzes the oxidation of 3-carboxy-2-hydroxy-4-methylpentanoate (3-isopropylmalate) to 3-carboxy-4-methyl-2-oxopentanoate. The product decarboxylates to 4-methyl-2 oxopentanoate. The protein is 3-isopropylmalate dehydrogenase of Pelagibacter ubique (strain HTCC1062).